The following is a 177-amino-acid chain: Large ribosomal subunit protein uL6 (177 aa).

A compositionally biased stretch (basic and acidic residues) spans 154–171; the sequence is PEPYKGKGVRYADEQVRR. The disordered stretch occupies residues 154 to 177; it reads PEPYKGKGVRYADEQVRRKEAKKK.

It belongs to the universal ribosomal protein uL6 family. As to quaternary structure, part of the 50S ribosomal subunit.

Its function is as follows. This protein binds to the 23S rRNA, and is important in its secondary structure. It is located near the subunit interface in the base of the L7/L12 stalk, and near the tRNA binding site of the peptidyltransferase center. This Marinobacter nauticus (strain ATCC 700491 / DSM 11845 / VT8) (Marinobacter aquaeolei) protein is Large ribosomal subunit protein uL6.